Consider the following 85-residue polypeptide: Translation initiation factor IF-1 1 (85 aa).

The S1-like domain occupies methionine 1–isoleucine 72.

The protein belongs to the IF-1 family. As to quaternary structure, component of the 30S ribosomal translation pre-initiation complex which assembles on the 30S ribosome in the order IF-2 and IF-3, IF-1 and N-formylmethionyl-tRNA(fMet); mRNA recruitment can occur at any time during PIC assembly.

Its subcellular location is the cytoplasm. Functionally, one of the essential components for the initiation of protein synthesis. Stabilizes the binding of IF-2 and IF-3 on the 30S subunit to which N-formylmethionyl-tRNA(fMet) subsequently binds. Helps modulate mRNA selection, yielding the 30S pre-initiation complex (PIC). Upon addition of the 50S ribosomal subunit IF-1, IF-2 and IF-3 are released leaving the mature 70S translation initiation complex. This Paracidovorax citrulli (strain AAC00-1) (Acidovorax citrulli) protein is Translation initiation factor IF-1 1.